Reading from the N-terminus, the 568-residue chain is NADPH oxidase 3 (568 aa).

At 1–12 (MPTCWILNESVS) the chain is on the cytoplasmic side. The chain crosses the membrane as a helical span at residues 13-33 (FVVALLWLAINIYLFIDTFCW). At 34 to 49 (YAEEESFFYTRVILGS) the chain is on the extracellular side. A helical transmembrane segment spans residues 50 to 70 (ALAWARASAVCLNFNCMLILL). Residues 55-284 (RASAVCLNFN…VVLYACEIII (230 aa)) form the Ferric oxidoreductase domain. At 71 to 103 (PVSRNFVSLVRGTSVCCRGPWRRQLDKNLKFHK) the chain is on the cytoplasmic side. A helical transmembrane segment spans residues 104-124 (LVAYGIAVNSVIHIVAHLFNL). Residues 125 to 167 (ERYHLGQAKDAEGLLAALSKLGNAPNESYLNPVRTLYTGTTTQ) lie on the Extracellular side of the membrane. Residues 168-188 (LLMTVSGITGLVISLALILIM) traverse the membrane as a helical segment. Residues 189–201 (TSSTEFIRQSSYE) lie on the Cytoplasmic side of the membrane. Residues 202–222 (LFWYTHHIFIFLFISLAIHGG) traverse the membrane as a helical segment. The Extracellular portion of the chain corresponds to 223-395 (GRIIRGQTPE…DGPFGGSLAD (173 aa)). An N-linked (GlcNAc...) asparagine glycan is attached at Asn-238. An FAD-binding FR-type domain is found at 285 to 395 (RFWRSHQEVV…DGPFGGSLAD (111 aa)). The chain crosses the membrane as a helical span at residues 396 to 416 (VFHYPVSVCIATGIGVTPFAS). Residues 417 to 568 (LLKSVWYKCC…VHFYYNKENF (152 aa)) are Cytoplasmic-facing.

Forms a heterodimer with CYBA/p22phox which is essential for its activity and cell membrane localization. It depends on heme as a cofactor. Post-translationally, N-glycosylated in a CYBA/p22phox-dependent manner. Expressed in the inner ear by the spiral glanglia and the organ of Corti.

It is found in the cell membrane. It catalyses the reaction NADPH + 2 O2 = 2 superoxide + NADP(+) + H(+). With respect to regulation, activated by the ototoxic drug cisplatin. Activated by NOXO1. Cooperatively activated by NCF1 and NCF2 or NOXA1 in a phorbol 12-myristate 13-acetate (PMA)-dependent manner. Inhibited by diphenyleneiodonium chloride. Its function is as follows. NADPH oxidase that catalyzes the generation of superoxide from molecular oxygen utilizing NADPH as an electron donor, upon formation of a complex with CYBA/p22phox. Plays a role in the biogenesis of otoconia/otolith, which are crystalline structures of the inner ear involved in the perception of gravity. This is NADPH oxidase 3 (Nox3) from Rattus norvegicus (Rat).